Reading from the N-terminus, the 268-residue chain is 3-methyl-2-oxobutanoate hydroxymethyltransferase (268 aa).

Mg(2+) is bound by residues aspartate 41 and aspartate 80. Residues 41 to 42 (DS), aspartate 80, and lysine 110 each bind 3-methyl-2-oxobutanoate. Position 112 (glutamate 112) interacts with Mg(2+). Catalysis depends on glutamate 178, which acts as the Proton acceptor.

This sequence belongs to the PanB family. As to quaternary structure, homodecamer; pentamer of dimers. The cofactor is Mg(2+).

Its subcellular location is the cytoplasm. It catalyses the reaction 3-methyl-2-oxobutanoate + (6R)-5,10-methylene-5,6,7,8-tetrahydrofolate + H2O = 2-dehydropantoate + (6S)-5,6,7,8-tetrahydrofolate. The protein operates within cofactor biosynthesis; coenzyme A biosynthesis. Its function is as follows. Catalyzes the reversible reaction in which hydroxymethyl group from 5,10-methylenetetrahydrofolate is transferred onto alpha-ketoisovalerate to form ketopantoate. This chain is 3-methyl-2-oxobutanoate hydroxymethyltransferase, found in Natronomonas pharaonis (strain ATCC 35678 / DSM 2160 / CIP 103997 / JCM 8858 / NBRC 14720 / NCIMB 2260 / Gabara) (Halobacterium pharaonis).